A 496-amino-acid polypeptide reads, in one-letter code: UDP-N-acetylmuramate--L-alanine ligase (496 aa).

Residue Gly-122–Thr-128 coordinates ATP.

This sequence belongs to the MurCDEF family.

The protein localises to the cytoplasm. The enzyme catalyses UDP-N-acetyl-alpha-D-muramate + L-alanine + ATP = UDP-N-acetyl-alpha-D-muramoyl-L-alanine + ADP + phosphate + H(+). The protein operates within cell wall biogenesis; peptidoglycan biosynthesis. Functionally, cell wall formation. The protein is UDP-N-acetylmuramate--L-alanine ligase of Mycolicibacterium paratuberculosis (strain ATCC BAA-968 / K-10) (Mycobacterium paratuberculosis).